Reading from the N-terminus, the 361-residue chain is Blue-sensitive opsin (361 aa).

The Extracellular segment spans residues Met1–Leu43. N-linked (GlcNAc...) asparagine glycosylation occurs at Asn24. The helical transmembrane segment at Phe44–Cys68 threads the bilayer. Topologically, residues Thr69–Asn80 are cytoplasmic. A helical transmembrane segment spans residues Tyr81 to Ser106. Over Gln107–Glu120 the chain is Extracellular. The cysteines at positions 117 and 194 are disulfide-linked. A helical transmembrane segment spans residues Gly121–Phe140. Residues Glu141–His159 lie on the Cytoplasmic side of the membrane. The helical transmembrane segment at Ala160 to Ser183 threads the bilayer. Residues Arg184–Ser209 are Extracellular-facing. Residues Tyr210 to Leu237 traverse the membrane as a helical segment. Residues Arg238–Lys259 lie on the Cytoplasmic side of the membrane. A helical membrane pass occupies residues Met260–Val283. The Extracellular portion of the chain corresponds to Thr284 to Glu291. A helical membrane pass occupies residues Val292 to Met316. Lys303 carries the N6-(retinylidene)lysine modification. At Asn317 to Ala361 the chain is on the cytoplasmic side. A disordered region spans residues Asp338–Ala361. Positions Ser342–Ala361 are enriched in low complexity.

The protein belongs to the G-protein coupled receptor 1 family. Opsin subfamily. Phosphorylated on some or all of the serine and threonine residues present in the C-terminal region. As to expression, the color pigments are found in the cone photoreceptor cells.

The protein localises to the membrane. Functionally, visual pigments are the light-absorbing molecules that mediate vision. They consist of an apoprotein, opsin, covalently linked to cis-retinal. This Gallus gallus (Chicken) protein is Blue-sensitive opsin.